The chain runs to 200 residues: Large ribosomal subunit protein uL4 (200 aa).

The disordered stretch occupies residues 38–68; sequence GRQGSKQQKTRSDVRGGGKRPWRQKGTGRAR. The segment covering 54 to 65 has biased composition (basic residues); the sequence is GGKRPWRQKGTG.

Belongs to the universal ribosomal protein uL4 family. Part of the 50S ribosomal subunit.

Its function is as follows. One of the primary rRNA binding proteins, this protein initially binds near the 5'-end of the 23S rRNA. It is important during the early stages of 50S assembly. It makes multiple contacts with different domains of the 23S rRNA in the assembled 50S subunit and ribosome. In terms of biological role, forms part of the polypeptide exit tunnel. This is Large ribosomal subunit protein uL4 from Pseudomonas fluorescens (strain Pf0-1).